Here is a 61-residue protein sequence, read N- to C-terminus: Metallothionein-1 (61 aa).

The residue at position 1 (Met-1) is an N-acetylmethionine. The interval 1-29 (MDPNCSCSTGGSCTCSSSCGCKNCKCTSC) is beta. Residues Cys-5, Cys-7, Cys-13, Cys-15, Cys-19, Cys-21, Cys-24, Cys-26, Cys-29, Cys-33, Cys-34, Cys-36, Cys-37, Cys-41, Cys-44, Cys-48, Cys-50, Cys-57, Cys-59, and Cys-60 each coordinate a divalent metal cation. Residues 30 to 61 (KKSCCSCCPVGCSKCAQGCVCKGASDKCTCCA) are alpha.

Belongs to the metallothionein superfamily. Type 1 family.

In terms of biological role, metallothioneins have a high content of cysteine residues that bind various heavy metals; these proteins are transcriptionally regulated by both heavy metals and glucocorticoids. The sequence is that of Metallothionein-1 (Mt1) from Rattus norvegicus (Rat).